The primary structure comprises 315 residues: Iron(3+)-hydroxamate-binding protein FhuD (315 aa).

Positions 1 to 23 (MTHIYKKLGAAFFALLLIAALAA) are cleaved as a signal peptide. A lipid anchor (N-palmitoyl cysteine) is attached at cysteine 24. Residue cysteine 24 is the site of S-diacylglycerol cysteine attachment. Residues 60-315 (RVVVMADGYY…LEFITESLTK (256 aa)) enclose the Fe/B12 periplasmic-binding domain.

The protein belongs to the bacterial solute-binding protein 8 family. In terms of assembly, the complex is composed of an ATP-binding protein (FhuC), two transmembrane proteins (FhuB and FhuG) and a solute-binding protein (FhuD or YxeB).

The protein localises to the cell membrane. It is found in the membrane raft. Functionally, part of the ABC transporter complex FhuCBGD involved in iron(3+)-hydroxamate import. Binds the iron(3+)-hydroxamate complex and transfers it to the membrane-bound permease. Required for the transport of ferrichrome and coprogen. This Bacillus subtilis (strain 168) protein is Iron(3+)-hydroxamate-binding protein FhuD (fhuD).